A 189-amino-acid polypeptide reads, in one-letter code: Nucleoside triphosphate pyrophosphatase (189 aa).

Catalysis depends on Asp-70, which acts as the Proton acceptor.

This sequence belongs to the Maf family. It depends on a divalent metal cation as a cofactor.

Its subcellular location is the cytoplasm. The catalysed reaction is a ribonucleoside 5'-triphosphate + H2O = a ribonucleoside 5'-phosphate + diphosphate + H(+). It carries out the reaction a 2'-deoxyribonucleoside 5'-triphosphate + H2O = a 2'-deoxyribonucleoside 5'-phosphate + diphosphate + H(+). Functionally, nucleoside triphosphate pyrophosphatase. May have a dual role in cell division arrest and in preventing the incorporation of modified nucleotides into cellular nucleic acids. The protein is Nucleoside triphosphate pyrophosphatase of Xylella fastidiosa (strain 9a5c).